Consider the following 72-residue polypeptide: Heat shock factor-binding protein 1-like protein 1 (72 aa).

Positions 12–66 form a coiled coil; the sequence is DLLQNAAENLLQEVEEHFQALTATLNLRMEEMGNRIEDLQRNVDDLMAQAGIENS.

It belongs to the HSBP1 family.

The protein is Heat shock factor-binding protein 1-like protein 1 (Hsbp1l1) of Rattus norvegicus (Rat).